The sequence spans 43 residues: Potassium channel toxin gamma-KTx 4.12 (43 aa).

4 disulfides stabilise this stretch: C5–C23, C11–C34, C20–C39, and C24–C41.

Expressed by the venom gland.

The protein resides in the secreted. In terms of biological role, reversibly blocks Kv11/ERG potassium channels. Is less toxic than ergtoxin (AC Q86QT3). In Centruroides sculpturatus (Arizona bark scorpion), this protein is Potassium channel toxin gamma-KTx 4.12.